Consider the following 130-residue polypeptide: Small ribosomal subunit protein uS9 (130 aa).

This sequence belongs to the universal ribosomal protein uS9 family.

The chain is Small ribosomal subunit protein uS9 (rpsI) from Geobacillus stearothermophilus (Bacillus stearothermophilus).